Reading from the N-terminus, the 1037-residue chain is Huntingtin-interacting protein 1 (1037 aa).

The region spanning 32–160 (ERESFERTQT…EYHTKNPRFP (129 aa)) is the ENTH domain. At S338 the chain carries Phosphoserine. The stretch at 368-644 (VNKDEKDHLI…IQDALNQLEE (277 aa)) forms a coiled coil. Positions 410 to 491 (SELEADLAEQ…HADLLRKNAE (82 aa)) are pDED. Residues 771 to 1012 (GLDIKQEELG…ELRKKHYELA (242 aa)) form the I/LWEQ domain. The interval 867 to 924 (RWTEGLISASKAVGWGATVMVDAADLVVQGRGKFEELMVCSHEIAASTAQLVAASKVK) is important for actin binding. The disordered stretch occupies residues 1017–1037 (GWEEGTEASPPTLQEVVTEKE).

Belongs to the SLA2 family. As to quaternary structure, homodimer. Binds actin. Binds HTT (via N-terminus). This interaction is restricted to the brain. Binds to IFT57. In normal conditions, it poorly interacts with IFT57, HIP1 being strongly associated with HTT. However, in mutant HTT proteins with a long poly-Gln region, interaction between HTT and HIP1 is inhibited, promoting the interaction between HIP1 and IFT57. Interacts with CLTB (via N-terminus). Interacts (via coiled coil domain) with AR. Interacts with AP2A1, AP2A2, CLTC and HIP1R. Interacts with GRIA1, GRIN2A and GRIN2B. In terms of tissue distribution, ubiquitously expressed with the highest level in brain. Expression is up-regulated in prostate and colon cancer.

It localises to the cytoplasm. The protein resides in the nucleus. The protein localises to the endomembrane system. Its subcellular location is the cytoplasmic vesicle. It is found in the clathrin-coated vesicle membrane. In terms of biological role, plays a role in clathrin-mediated endocytosis and trafficking. Involved in regulating AMPA receptor trafficking in the central nervous system in an NMDA-dependent manner. Regulates presynaptic nerve terminal activity. Enhances androgen receptor (AR)-mediated transcription. May act as a proapoptotic protein that induces cell death by acting through the intrinsic apoptosis pathway. Binds 3-phosphoinositides (via ENTH domain). May act through the ENTH domain to promote cell survival by stabilizing receptor tyrosine kinases following ligand-induced endocytosis. May play a functional role in the cell filament networks. May be required for differentiation, proliferation, and/or survival of somatic and germline progenitors. The chain is Huntingtin-interacting protein 1 (HIP1) from Homo sapiens (Human).